Reading from the N-terminus, the 648-residue chain is Protein kinase YegI (648 aa).

One can recognise a Protein kinase domain in the interval 15 to 302; it reads TTLGRELGKG…KAWVAALDSL (288 aa). ATP contacts are provided by residues 21-29 and K41; that span reads LGKGGEGAV. D143 serves as the catalytic Proton acceptor.

Autophosphorylated. Dephosphorylated by PphC.

Probable serine/threonine kinase. In Escherichia coli (strain K12), this protein is Protein kinase YegI (yegI).